We begin with the raw amino-acid sequence, 329 residues long: Glutamyl-tRNA reductase (329 aa).

Substrate is bound by residues 51-54 (TCLR), Ser99, 104-106 (EDQ), and Gln110. Cys52 serves as the catalytic Nucleophile. Residue 179-184 (GIGELA) participates in NADP(+) binding.

This sequence belongs to the glutamyl-tRNA reductase family. As to quaternary structure, homodimer.

The catalysed reaction is (S)-4-amino-5-oxopentanoate + tRNA(Glu) + NADP(+) = L-glutamyl-tRNA(Glu) + NADPH + H(+). It participates in porphyrin-containing compound metabolism; protoporphyrin-IX biosynthesis; 5-aminolevulinate from L-glutamyl-tRNA(Glu): step 1/2. Functionally, catalyzes the NADPH-dependent reduction of glutamyl-tRNA(Glu) to glutamate 1-semialdehyde (GSA). The chain is Glutamyl-tRNA reductase from Fusobacterium nucleatum subsp. nucleatum (strain ATCC 25586 / DSM 15643 / BCRC 10681 / CIP 101130 / JCM 8532 / KCTC 2640 / LMG 13131 / VPI 4355).